The following is a 288-amino-acid chain: GTP-binding protein 8 (288 aa).

Positions 109–282 (HRPEVCFIGR…RCFIADITGN (174 aa)) constitute an EngB-type G domain. GTP is bound by residues 117–124 (GRSNVGKS), 146–150 (GHTKK), 164–167 (DMPG), 226–229 (TKID), and 261–263 (VSA). The Mg(2+) site is built by Ser124 and Thr148.

It belongs to the TRAFAC class TrmE-Era-EngA-EngB-Septin-like GTPase superfamily. EngB GTPase family. Mg(2+) is required as a cofactor.

This is GTP-binding protein 8 (GTPBP8) from Bos taurus (Bovine).